Here is a 328-residue protein sequence, read N- to C-terminus: 4-hydroxythreonine-4-phosphate dehydrogenase (328 aa).

Positions 130 and 131 each coordinate substrate. 3 residues coordinate a divalent metal cation: His163, His208, and His263. Residues Lys271, Asn280, and Arg289 each coordinate substrate.

Belongs to the PdxA family. Homodimer. The cofactor is Zn(2+). It depends on Mg(2+) as a cofactor. Co(2+) is required as a cofactor.

It is found in the cytoplasm. The catalysed reaction is 4-(phosphooxy)-L-threonine + NAD(+) = 3-amino-2-oxopropyl phosphate + CO2 + NADH. The protein operates within cofactor biosynthesis; pyridoxine 5'-phosphate biosynthesis; pyridoxine 5'-phosphate from D-erythrose 4-phosphate: step 4/5. In terms of biological role, catalyzes the NAD(P)-dependent oxidation of 4-(phosphooxy)-L-threonine (HTP) into 2-amino-3-oxo-4-(phosphooxy)butyric acid which spontaneously decarboxylates to form 3-amino-2-oxopropyl phosphate (AHAP). In Burkholderia vietnamiensis (strain G4 / LMG 22486) (Burkholderia cepacia (strain R1808)), this protein is 4-hydroxythreonine-4-phosphate dehydrogenase.